Reading from the N-terminus, the 309-residue chain is MNRLQVVLPGLNLKNPIIPASGCFGFGEEFAKLYDLSVLGGIMIKAATGEERYGNPTPRVAESGMGMLNAIGLQNPGVEGIIAQKLPFLRQFDTEIIANVAGSTPEEYEDVTRRISRDPVVKAIELNISCPNVKSGGLQFGTDPQMAAELTRRVKAVSEKPVYVKLSPNVTSIVEMAQAVEQAGADGLTMINTLVGMRIDVRTGQPILANRIGGLSGPAIKPVAVRMIHDVAQVVTIPIIGMGGVMEVDDVLEMIYAGASAVAIGTANFVNPFICQELITDLPKRMDELGIEHIMDIRGKAYGATLHRA.

FMN contacts are provided by residues serine 21 and lysine 45–alanine 46. Residues lysine 45 and asparagine 69–leucine 73 each bind substrate. FMN is bound by residues asparagine 99 and asparagine 127. Position 127 (asparagine 127) interacts with substrate. The active-site Nucleophile is cysteine 130. Lysine 165 and isoleucine 191 together coordinate FMN. A substrate-binding site is contributed by asparagine 192–threonine 193. FMN contacts are provided by residues glycine 217, glycine 243–glycine 244, and glycine 265–threonine 266.

The protein belongs to the dihydroorotate dehydrogenase family. Type 1 subfamily. Heterotetramer of 2 PyrK and 2 PyrD type B subunits. FMN serves as cofactor.

It localises to the cytoplasm. The enzyme catalyses (S)-dihydroorotate + NAD(+) = orotate + NADH + H(+). It functions in the pathway pyrimidine metabolism; UMP biosynthesis via de novo pathway; orotate from (S)-dihydroorotate (NAD(+) route): step 1/1. In terms of biological role, catalyzes the conversion of dihydroorotate to orotate with NAD(+) as electron acceptor. The polypeptide is Dihydroorotate dehydrogenase B (NAD(+)), catalytic subunit (pyrD) (Exiguobacterium sibiricum (strain DSM 17290 / CCUG 55495 / CIP 109462 / JCM 13490 / 255-15)).